The following is a 423-amino-acid chain: SH2 domain-containing adapter protein F (423 aa).

3 disordered regions span residues Met1–Arg87, Asp110–Lys208, and Asp225–Thr312. Acidic residues predominate over residues Glu192–Gln203. At Tyr201 the chain carries Phosphotyrosine. The 96-residue stretch at Trp323–Val418 folds into the SH2 domain.

Interacts with phosphorylated 'Tyr-720' of PDGFRA via its SH2 domain. May become phosphorylated upon binding to PDGFRA. In terms of tissue distribution, expressed in skeletal muscle, brain, liver, prostate, testis, ovary, small intestine and colon.

Adapter protein which may play a role in the regulation of apoptosis in response to PDGF. The chain is SH2 domain-containing adapter protein F from Homo sapiens (Human).